Reading from the N-terminus, the 796-residue chain is Protein translocase subunit SecA 2 (796 aa).

ATP contacts are provided by residues glutamine 84, 102–106 (GEGKT), and aspartate 496.

Belongs to the SecA family. Monomer and homodimer (Potential). Part of the accessory SecA2/SecY2 protein translocation apparatus required to export cell wall protein SraP.

The protein localises to the cell membrane. Its subcellular location is the cytoplasm. It catalyses the reaction ATP + H2O + cellular proteinSide 1 = ADP + phosphate + cellular proteinSide 2.. Functionally, part of the accessory SecA2/SecY2 system specifically required to export SraP, a serine-rich repeat cell wall protein encoded upstream in the same operon. The sequence is that of Protein translocase subunit SecA 2 from Staphylococcus aureus (strain NCTC 8325 / PS 47).